A 1058-amino-acid polypeptide reads, in one-letter code: Carbamoyl phosphate synthase large chain (1058 aa).

The tract at residues 1–401 (MPKRTDIQKI…SLLKACRSLE (401 aa)) is carboxyphosphate synthetic domain. ATP contacts are provided by Arg-129, Arg-169, Gly-175, Gly-176, Arg-208, Ile-210, Glu-215, Gly-241, Ile-242, His-243, Gln-284, and Glu-298. The 195-residue stretch at 133–327 (KQLMEELEQP…IAKLAAKIAV (195 aa)) folds into the ATP-grasp 1 domain. Mg(2+) contacts are provided by Gln-284, Glu-298, and Asn-300. Residues Gln-284, Glu-298, and Asn-300 each coordinate Mn(2+). The tract at residues 402–546 (IGVHHNEIPE…YSTYGWENES (145 aa)) is oligomerization domain. Residues 547 to 929 (IKSDKESVLV…ALYKAFEASY (383 aa)) are carbamoyl phosphate synthetic domain. An ATP-grasp 2 domain is found at 671–861 (EQALKELDIP…MAQVATKLIL (191 aa)). Residues Arg-707, Ser-746, Ile-748, Glu-752, Gly-777, Val-778, His-779, Ser-780, Gln-820, and Glu-832 each coordinate ATP. 3 residues coordinate Mg(2+): Gln-820, Glu-832, and Asn-834. The Mn(2+) site is built by Gln-820, Glu-832, and Asn-834. In terms of domain architecture, MGS-like spans 930-1058 (LHLPTFGNVV…ESRSFVTEAI (129 aa)). Residues 930–1058 (LHLPTFGNVV…ESRSFVTEAI (129 aa)) form an allosteric domain region.

This sequence belongs to the CarB family. As to quaternary structure, composed of two chains; the small (or glutamine) chain promotes the hydrolysis of glutamine to ammonia, which is used by the large (or ammonia) chain to synthesize carbamoyl phosphate. Tetramer of heterodimers (alpha,beta)4. Mg(2+) serves as cofactor. The cofactor is Mn(2+).

It catalyses the reaction hydrogencarbonate + L-glutamine + 2 ATP + H2O = carbamoyl phosphate + L-glutamate + 2 ADP + phosphate + 2 H(+). The catalysed reaction is hydrogencarbonate + NH4(+) + 2 ATP = carbamoyl phosphate + 2 ADP + phosphate + 2 H(+). It functions in the pathway amino-acid biosynthesis; L-arginine biosynthesis; carbamoyl phosphate from bicarbonate: step 1/1. Its pathway is pyrimidine metabolism; UMP biosynthesis via de novo pathway; (S)-dihydroorotate from bicarbonate: step 1/3. Its function is as follows. Large subunit of the glutamine-dependent carbamoyl phosphate synthetase (CPSase). CPSase catalyzes the formation of carbamoyl phosphate from the ammonia moiety of glutamine, carbonate, and phosphate donated by ATP, constituting the first step of 2 biosynthetic pathways, one leading to arginine and/or urea and the other to pyrimidine nucleotides. The large subunit (synthetase) binds the substrates ammonia (free or transferred from glutamine from the small subunit), hydrogencarbonate and ATP and carries out an ATP-coupled ligase reaction, activating hydrogencarbonate by forming carboxy phosphate which reacts with ammonia to form carbamoyl phosphate. This is Carbamoyl phosphate synthase large chain from Streptococcus pneumoniae (strain ATCC 700669 / Spain 23F-1).